Consider the following 1224-residue polypeptide: Probable serine/threonine-protein kinase DDB_G0292350 (1224 aa).

2 disordered regions span residues 57–98 and 252–284; these read MSGS…STQR and SSPS…DISN. Low complexity-rich tracts occupy residues 58-74 and 83-95; these read SGSI…FTSS and SSSN…SDNS. Coiled-coil stretches lie at residues 352 to 381 and 540 to 569; these read LFKQ…KQNN and DVQL…EYLT. 2 disordered regions span residues 693 to 784 and 815 to 836; these read QPIP…FVIT and FTNN…TNNI. Residues 743–768 are compositionally biased toward low complexity; it reads NNNNNNNNNINNNNINNNNINNNKNG. Residues 772-784 show a composition bias toward polar residues; sequence GETPSPSSSFVIT. A Protein kinase domain is found at 935 to 1193; the sequence is FRDKIKLGTG…PEMLLHHTFL (259 aa). Residues 941–949 and lysine 964 each bind ATP; that span reads LGTGAFGNV. The Proton acceptor role is filled by aspartate 1063.

This sequence belongs to the protein kinase superfamily. Ser/Thr protein kinase family. Mg(2+) serves as cofactor.

The catalysed reaction is L-seryl-[protein] + ATP = O-phospho-L-seryl-[protein] + ADP + H(+). The enzyme catalyses L-threonyl-[protein] + ATP = O-phospho-L-threonyl-[protein] + ADP + H(+). This is Probable serine/threonine-protein kinase DDB_G0292350 from Dictyostelium discoideum (Social amoeba).